A 224-amino-acid polypeptide reads, in one-letter code: Uracil-DNA glycosylase (224 aa).

Catalysis depends on aspartate 61, which acts as the Proton acceptor.

Belongs to the uracil-DNA glycosylase (UDG) superfamily. UNG family.

It localises to the cytoplasm. It carries out the reaction Hydrolyzes single-stranded DNA or mismatched double-stranded DNA and polynucleotides, releasing free uracil.. Excises uracil residues from the DNA which can arise as a result of misincorporation of dUMP residues by DNA polymerase or due to deamination of cytosine. This Mannheimia succiniciproducens (strain KCTC 0769BP / MBEL55E) protein is Uracil-DNA glycosylase.